Here is a 572-residue protein sequence, read N- to C-terminus: Acetyl-coenzyme A synthetase (572 aa).

CoA is bound at residue Thr-260. ATP-binding positions include 333 to 335, 354 to 359, Asp-440, and Arg-455; these read GEP and DTWWMT. A CoA-binding site is contributed by Ser-463. An ATP-binding site is contributed by Arg-466. Val-477, His-479, and Ile-482 together coordinate Mg(2+). Lys-524 lines the CoA pocket. Lys-549 carries the post-translational modification N6-acetyllysine.

Belongs to the ATP-dependent AMP-binding enzyme family. Interacts with FloT. Mg(2+) serves as cofactor. In terms of processing, acetylated. Deacetylation by the SIR2-homolog deacetylase activates the enzyme.

It localises to the cell membrane. The protein localises to the membrane raft. The catalysed reaction is acetate + ATP + CoA = acetyl-CoA + AMP + diphosphate. Its function is as follows. Catalyzes the conversion of acetate into acetyl-CoA (AcCoA), an essential intermediate at the junction of anabolic and catabolic pathways. AcsA undergoes a two-step reaction. In the first half reaction, AcsA combines acetate with ATP to form acetyl-adenylate (AcAMP) intermediate. In the second half reaction, it can then transfer the acetyl group from AcAMP to the sulfhydryl group of CoA, forming the product AcCoA. Has a role in growth and sporulation on acetate. This chain is Acetyl-coenzyme A synthetase (acsA), found in Bacillus subtilis (strain 168).